We begin with the raw amino-acid sequence, 413 residues long: Protein esc1 (413 aa).

Residues 1 to 22 (MSSYALPSMQPTPTSSIPLRQM) are compositionally biased toward polar residues. 2 disordered regions span residues 1 to 202 (MSSY…NQPS) and 230 to 265 (MYVP…YSQG). Residues 23-42 (SQPTTSAPSNSASSTPYSPQ) show a composition bias toward low complexity. The segment covering 43–63 (QVPLTHNSYPLSTPSSFQHGQ) has biased composition (polar residues). 2 stretches are compositionally biased toward low complexity: residues 86 to 103 (SAAP…STAA) and 116 to 126 (SSSSYVYSVPP). Positions 127–136 (TNSTTSQASA) are enriched in polar residues. Low complexity predominate over residues 150–197 (STTLTPSTTDSSSTDVSSSDSVSTSASSSNASNTVSVTSPASSSATPL). Residues 334 to 385 (ELRTSHKLAERKRRKEIKELFDDLKDALPLDKSTKSSKWGLLTRAIQYIEQL) enclose the bHLH domain.

In terms of assembly, efficient DNA binding requires dimerization with another bHLH protein.

The protein resides in the nucleus. Its function is as follows. Involved in the sexual differentiation process. Modulate the ability of the cell to differentiate in response to the nitrogen starvation signal; in particular in response to decreases in the level of cellular cAMP. This chain is Protein esc1 (esc1), found in Schizosaccharomyces pombe (strain 972 / ATCC 24843) (Fission yeast).